The sequence spans 689 residues: Elongation factor G (689 aa).

A tr-type G domain is found at 8–282 (KKTRNIGIMA…AVIDYLPSPV (275 aa)). Residues 17–24 (AHIDAGKT), 81–85 (DTPGH), and 135–138 (NKMD) contribute to the GTP site.

This sequence belongs to the TRAFAC class translation factor GTPase superfamily. Classic translation factor GTPase family. EF-G/EF-2 subfamily.

Its subcellular location is the cytoplasm. Catalyzes the GTP-dependent ribosomal translocation step during translation elongation. During this step, the ribosome changes from the pre-translocational (PRE) to the post-translocational (POST) state as the newly formed A-site-bound peptidyl-tRNA and P-site-bound deacylated tRNA move to the P and E sites, respectively. Catalyzes the coordinated movement of the two tRNA molecules, the mRNA and conformational changes in the ribosome. The polypeptide is Elongation factor G (Halothermothrix orenii (strain H 168 / OCM 544 / DSM 9562)).